Here is a 310-residue protein sequence, read N- to C-terminus: MLIAGPTASGKSALALRLAQMHGGVVINTDSMQMYRDLRIITARPTPEEEALVPHRLYGTVDAAVNFSAGAFVEAAAGALAEARASGLLPIFIGGTGLYFKALTRGLSLVPPVPAEIRDAVRLRLDRDGVAALHAELARHDPAAAERLAPADRSRIARALEVVLATGRPLADWHGEASPPLLPPDGVTAVFLAPEREALYARIDARFAAMLRAGALDEVAALAERRLDPLLPAMKAHGVPALIRHLRGEISLDEAAVIGAADTRHYAKRQFTWFRHQLPEFRWVTPEEAGRVVDQEFQGNPSCTTSTASS.

An ATP-binding site is contributed by 5-12 (GPTASGKS). 7-12 (TASGKS) contacts substrate. An interaction with substrate tRNA region spans residues 30–33 (DSMQ).

This sequence belongs to the IPP transferase family. In terms of assembly, monomer. The cofactor is Mg(2+).

The catalysed reaction is adenosine(37) in tRNA + dimethylallyl diphosphate = N(6)-dimethylallyladenosine(37) in tRNA + diphosphate. In terms of biological role, catalyzes the transfer of a dimethylallyl group onto the adenine at position 37 in tRNAs that read codons beginning with uridine, leading to the formation of N6-(dimethylallyl)adenosine (i(6)A). This chain is tRNA dimethylallyltransferase, found in Rhodopseudomonas palustris (strain HaA2).